The chain runs to 153 residues: Transcription antitermination protein NusB (153 aa).

It belongs to the NusB family.

In terms of biological role, involved in transcription antitermination. Required for transcription of ribosomal RNA (rRNA) genes. Binds specifically to the boxA antiterminator sequence of the ribosomal RNA (rrn) operons. This is Transcription antitermination protein NusB from Beutenbergia cavernae (strain ATCC BAA-8 / DSM 12333 / CCUG 43141 / JCM 11478 / NBRC 16432 / NCIMB 13614 / HKI 0122).